We begin with the raw amino-acid sequence, 436 residues long: Trigger factor (436 aa).

The region spanning 161 to 246 is the PPIase FKBP-type domain; it reads DDQLNIDFVG…VNSVSEPKLP (86 aa).

This sequence belongs to the FKBP-type PPIase family. Tig subfamily.

Its subcellular location is the cytoplasm. The enzyme catalyses [protein]-peptidylproline (omega=180) = [protein]-peptidylproline (omega=0). Its function is as follows. Involved in protein export. Acts as a chaperone by maintaining the newly synthesized protein in an open conformation. Functions as a peptidyl-prolyl cis-trans isomerase. This Pseudomonas fluorescens (strain ATCC BAA-477 / NRRL B-23932 / Pf-5) protein is Trigger factor.